A 684-amino-acid polypeptide reads, in one-letter code: Rabphilin-3A (684 aa).

The disordered stretch occupies residues 1–21 (MTDTVVNRWMYPGDGPLQSND). One can recognise a RabBD domain in the interval 40–157 (QRKQEELTDE…KRSGAWFFKG (118 aa)). The FYVE-type zinc-finger motif lies at 88–145 (GDGVNRCILCGEQLGMLGSACVVCEDCKKNVCTKCGVETSNNRPHPVWLCKICLEQRE). Zn(2+) is bound by residues cysteine 94, cysteine 97, cysteine 111, cysteine 114, cysteine 119, cysteine 122, cysteine 137, and cysteine 140. The segment at 162 to 377 (VLPQPMPIKK…EEEEANSYDS (216 aa)) is disordered. A compositionally biased stretch (basic and acidic residues) spans 199–208 (ARGDMEDRRA). Arginine 223 carries the post-translational modification Omega-N-methylarginine. The span at 243–252 (RDSEGWDHGH) shows a compositional bias: basic and acidic residues. The residue at position 274 (serine 274) is a Phosphoserine. The span at 283–299 (ASMPSPAPPQPVQPGPP) shows a compositional bias: pro residues. The span at 301-310 (GSRAAPGPGR) shows a compositional bias: low complexity. The 123-residue stretch at 382-504 (TLGALEFSLL…KANQRKNFNI (123 aa)) folds into the C2 1 domain. Ca(2+)-binding residues include methionine 412, aspartate 413, aspartate 419, aspartate 474, glutamate 475, aspartate 476, glutamate 482, glutamate 529, aspartate 571, aspartate 577, aspartate 631, tyrosine 632, aspartate 633, and aspartate 639. Residues 540–673 (ERGKILVSLM…NKDKKIERWH (134 aa)) form the C2 2 domain. Phosphoserine occurs at positions 682 and 683.

As to quaternary structure, interacts with RAB3B, RAB3C, RAB3D, RAB8A, RAB27A and RAB27B. Interacts with RAB3A; this interaction recruits RPH3A to synaptic vesicules. Interacts (via C2B domain) with SNAP25. Interacts with deubiquitinating enzyme CAND1; this interaction results in the deubiquitination of RPH3A. Interacts with GRIN2A and DLG4; this ternary complex regulates NMDA receptor composition at postsynaptic membranes. Interacts with SNCA. Ca(2+) serves as cofactor. Ubiquitinated. Deubiquitinated by CAND1 to prevent its degradation. Specifically expressed in brain.

It localises to the cytoplasmic vesicle. The protein resides in the secretory vesicle. It is found in the synaptic vesicle membrane. The protein localises to the cell projection. Its subcellular location is the dendritic spine. It localises to the postsynaptic cell membrane. The protein resides in the membrane. Functionally, plays an essential role in docking and fusion steps of regulated exocytosis. At the presynaptic level, RPH3A is recruited by RAB3A to the synaptic vesicle membrane in a GTP-dependent manner where it modulates synaptic vesicle trafficking and calcium-triggered neurotransmitter release. In the post-synaptic compartment, forms a ternary complex with GRIN2A and DLG4 and regulates NMDA receptor stability. Also plays a role in the exocytosis of arginine vasopressin hormone. This chain is Rabphilin-3A (Rph3a), found in Rattus norvegicus (Rat).